The primary structure comprises 139 residues: Large ribosomal subunit protein uL16 (139 aa).

The segment covering 1 to 19 (MLIPRRVKYRKQHHPKRTG) has biased composition (basic residues). The interval 1–23 (MLIPRRVKYRKQHHPKRTGAAKG) is disordered.

This sequence belongs to the universal ribosomal protein uL16 family. In terms of assembly, part of the 50S ribosomal subunit.

Its function is as follows. Binds 23S rRNA and is also seen to make contacts with the A and possibly P site tRNAs. The chain is Large ribosomal subunit protein uL16 from Cutibacterium acnes (strain DSM 16379 / KPA171202) (Propionibacterium acnes).